The chain runs to 370 residues: L-lysine 4-hydroxylase (370 aa).

His-176, Glu-178, and His-310 together coordinate Fe cation.

This sequence belongs to the clavaminate synthase family. Fe(2+) serves as cofactor.

The enzyme catalyses L-lysine + 2-oxoglutarate + O2 = (4R)-4-hydroxy-L-lysine + succinate + CO2. Alpha-ketoglutarate-dependent dioxygenase that in vitro catalyzes the regio- and stereoselective hydroxylation of L-lysine, leading to (4R)-4-hydroxy-L-lysine. To a lesser extent, can also use (3S)-3-hydroxy-L-lysine as substrate, producing the dihydroxylated product (3R,4R)-3,4-hydroxy-L-lysine. Cannot use D-lysine or L-ornithine as substrate. The protein is L-lysine 4-hydroxylase of Flavobacterium johnsoniae (strain ATCC 17061 / DSM 2064 / JCM 8514 / BCRC 14874 / CCUG 350202 / NBRC 14942 / NCIMB 11054 / UW101) (Cytophaga johnsonae).